The primary structure comprises 135 residues: Fatty acid-binding protein 5 (135 aa).

Ala-2 carries the post-translational modification N-acetylalanine. An N6-acetyllysine modification is found at Lys-17. Positions 24–34 (KELGVGIALRK) match the Nuclear localization signal motif. Cys-43 and Arg-109 together coordinate N-eicosanoyl ethanolamine. An intrachain disulfide couples Cys-120 to Cys-127. 129 to 131 (RIY) is a binding site for (9Z,12Z)-octadecadienoate. An N-eicosanoyl ethanolamine-binding site is contributed by Tyr-131. Tyr-131 contacts hexadecanoate. Residue Tyr-131 is modified to Phosphotyrosine.

It belongs to the calycin superfamily. Fatty-acid binding protein (FABP) family. Monomer. Homodimer. Keratinocytes; highly expressed in psoriatic skin. Expressed in brain gray matter.

Its subcellular location is the cytoplasm. It localises to the nucleus. The protein localises to the synapse. The protein resides in the postsynaptic density. It is found in the secreted. The enzyme catalyses hexadecanoate(out) = hexadecanoate(in). It carries out the reaction (9Z,12Z)-octadecadienoate(out) = (9Z,12Z)-octadecadienoate(in). It catalyses the reaction (9Z)-octadecenoate(out) = (9Z)-octadecenoate(in). Functionally, intracellular carrier for long-chain fatty acids and related active lipids, such as endocannabinoids, that regulate the metabolism and actions of the ligands they bind. In addition to the cytosolic transport, selectively delivers specific fatty acids from the cytosol to the nucleus, wherein they activate nuclear receptors. Delivers retinoic acid to the nuclear receptor peroxisome proliferator-activated receptor delta; which promotes proliferation and survival. May also serve as a synaptic carrier of endocannabinoid at central synapses and thus controls retrograde endocannabinoid signaling. Modulates inflammation by regulating PTGES induction via NF-kappa-B activation, and prostaglandin E2 (PGE2) biosynthesis during inflammation. May be involved in keratinocyte differentiation. The sequence is that of Fatty acid-binding protein 5 from Homo sapiens (Human).